The sequence spans 156 residues: Phosphoribosyl-AMP cyclohydrolase (156 aa).

Asp106 lines the Mg(2+) pocket. Cys107 lines the Zn(2+) pocket. Residues Asp108 and Asp110 each contribute to the Mg(2+) site. Residues Cys123 and Cys130 each coordinate Zn(2+).

The protein belongs to the PRA-CH family. In terms of assembly, homodimer. Mg(2+) serves as cofactor. The cofactor is Zn(2+).

The protein resides in the cytoplasm. It catalyses the reaction 1-(5-phospho-beta-D-ribosyl)-5'-AMP + H2O = 1-(5-phospho-beta-D-ribosyl)-5-[(5-phospho-beta-D-ribosylamino)methylideneamino]imidazole-4-carboxamide. It participates in amino-acid biosynthesis; L-histidine biosynthesis; L-histidine from 5-phospho-alpha-D-ribose 1-diphosphate: step 3/9. In terms of biological role, catalyzes the hydrolysis of the adenine ring of phosphoribosyl-AMP. This chain is Phosphoribosyl-AMP cyclohydrolase, found in Gluconobacter oxydans (strain 621H) (Gluconobacter suboxydans).